We begin with the raw amino-acid sequence, 224 residues long: Large ribosomal subunit protein uL1c (224 aa).

The protein belongs to the universal ribosomal protein uL1 family. As to quaternary structure, part of the 50S ribosomal subunit.

It localises to the plastid. The protein localises to the chloroplast. In terms of biological role, binds directly to 23S rRNA. Might be involved in E site tRNA release (Potential). This Cyanidioschyzon merolae (strain NIES-3377 / 10D) (Unicellular red alga) protein is Large ribosomal subunit protein uL1c (rpl1).